A 394-amino-acid chain; its full sequence is Queuine tRNA-ribosyltransferase (394 aa).

Asp-99 functions as the Proton acceptor in the catalytic mechanism. Substrate is bound by residues 99-103, Asp-153, Gln-195, and Gly-222; that span reads DSGGF. The segment at 253-259 is RNA binding; sequence GVGHPED. Residue Asp-272 is the Nucleophile of the active site. The RNA binding; important for wobble base 34 recognition stretch occupies residues 277–281; sequence TRTGR. Residues Cys-310, Cys-312, Cys-315, and His-341 each contribute to the Zn(2+) site.

The protein belongs to the queuine tRNA-ribosyltransferase family. As to quaternary structure, homodimer. Within each dimer, one monomer is responsible for RNA recognition and catalysis, while the other monomer binds to the replacement base PreQ1. The cofactor is Zn(2+).

It carries out the reaction 7-aminomethyl-7-carbaguanine + guanosine(34) in tRNA = 7-aminomethyl-7-carbaguanosine(34) in tRNA + guanine. Its pathway is tRNA modification; tRNA-queuosine biosynthesis. In terms of biological role, catalyzes the base-exchange of a guanine (G) residue with the queuine precursor 7-aminomethyl-7-deazaguanine (PreQ1) at position 34 (anticodon wobble position) in tRNAs with GU(N) anticodons (tRNA-Asp, -Asn, -His and -Tyr). Catalysis occurs through a double-displacement mechanism. The nucleophile active site attacks the C1' of nucleotide 34 to detach the guanine base from the RNA, forming a covalent enzyme-RNA intermediate. The proton acceptor active site deprotonates the incoming PreQ1, allowing a nucleophilic attack on the C1' of the ribose to form the product. After dissociation, two additional enzymatic reactions on the tRNA convert PreQ1 to queuine (Q), resulting in the hypermodified nucleoside queuosine (7-(((4,5-cis-dihydroxy-2-cyclopenten-1-yl)amino)methyl)-7-deazaguanosine). This is Queuine tRNA-ribosyltransferase from Deinococcus radiodurans (strain ATCC 13939 / DSM 20539 / JCM 16871 / CCUG 27074 / LMG 4051 / NBRC 15346 / NCIMB 9279 / VKM B-1422 / R1).